The primary structure comprises 257 residues: Hydroxyacylglutathione hydrolase (257 aa).

Positions 54, 56, 58, 59, 113, 137, and 175 each coordinate Zn(2+).

Belongs to the metallo-beta-lactamase superfamily. Glyoxalase II family. Monomer. Requires Zn(2+) as cofactor.

The enzyme catalyses an S-(2-hydroxyacyl)glutathione + H2O = a 2-hydroxy carboxylate + glutathione + H(+). Its pathway is secondary metabolite metabolism; methylglyoxal degradation; (R)-lactate from methylglyoxal: step 2/2. In terms of biological role, thiolesterase that catalyzes the hydrolysis of S-D-lactoyl-glutathione to form glutathione and D-lactic acid. The sequence is that of Hydroxyacylglutathione hydrolase from Gloeothece citriformis (strain PCC 7424) (Cyanothece sp. (strain PCC 7424)).